A 597-amino-acid polypeptide reads, in one-letter code: MGKTPSPGKWIKSLLGKKSSKSSLEKGGEKLRSAKKEELVVKVKDNNVSKLPTEPPVVSSQEVAATQTVVVPDVVIAEKQLSGDIEGDESSNVNLESGNDSEEVKLEEAATKVQAALRAQQAREESQNLKGITRVQAVIRGHLVRRQAVATYSCIWGIVKVQALVRGKKARSSETVAQLQKTNTETETSETLQGSTYSWMENPTKLSMIDKLLVSSPTTLPLKIQYSPEDPNSAKVWLGRWTQLQVWAPGPLVVKNLVPKSQTKKRSFQAVEAEKGKLKRGVRKPTGVSTTANSSTSRSTADNEKPKRTVRKASTLGKELSKIENDKSKQSSRKSTSAIKEGSSVEVKDEKPRISHKKASLSNGIGKATRKSAEKKKEIADAVQKELPIEEVSVSLVDAPEDEKMNLIPVTISKESDLDKDEKSLVLDKPEQDELRTAERDDKAEEELKTAERDDSAEEKIQEPDAQISSENGNVASENTKPSDRRASLPAKIENHHQDDGLTQSGRKIPSYMAPTASAKARIRGQGSPRIAQEKPEKNGTTRRHSLPPAANGKLSTMSPRAHRLLIASAKGSMNSDRSFSSSKDIGDKSTKAEWKR.

Positions 1–31 (MGKTPSPGKWIKSLLGKKSSKSSLEKGGEKL) are disordered. 3 consecutive IQ domains span residues 106–134 (LEEAATKVQAALRAQQAREESQNLKGITR), 135–153 (VQAVIRGHLVRRQAVATYS), and 157–183 (GIVKVQALVRGKKARSSETVAQLQKTN). A calmodulin-binding region spans residues 159–173 (VKVQALVRGKKARSS). A Nuclear localization signal 1 motif is present at residues 264 to 271 (KKRSFQAV). 2 disordered regions span residues 268-379 (FQAV…KKEI) and 407-597 (LIPV…EWKR). Low complexity predominate over residues 289-300 (STTANSSTSRST). Basic and acidic residues predominate over residues 319–329 (ELSKIENDKSK). The Nuclear localization signal 2 motif lies at 356–363 (HKKASLSN). Over residues 414–463 (KESDLDKDEKSLVLDKPEQDELRTAERDDKAEEELKTAERDDSAEEKIQE) the composition is skewed to basic and acidic residues. Polar residues predominate over residues 467 to 480 (QISSENGNVASENT). Basic and acidic residues predominate over residues 481 to 500 (KPSDRRASLPAKIENHHQDD). The span at 572 to 584 (GSMNSDRSFSSSK) shows a compositional bias: polar residues. Residues 585–597 (DIGDKSTKAEWKR) are compositionally biased toward basic and acidic residues.

The protein belongs to the IQD family. As to quaternary structure, binds to multiple calmodulin (CaM) in the presence of Ca(2+) and CaM-like proteins.

It localises to the nucleus. The protein localises to the nucleus envelope. The protein resides in the cytoplasm. It is found in the cytoskeleton. Its subcellular location is the cell membrane. Its function is as follows. May be involved in cooperative interactions with calmodulins or calmodulin-like proteins. Recruits calmodulin proteins to microtubules, thus being a potential scaffold in cellular signaling and trafficking. May associate with nucleic acids and regulate gene expression at the transcriptional or post-transcriptional level. In Arabidopsis thaliana (Mouse-ear cress), this protein is Protein IQ-DOMAIN 29.